A 596-amino-acid polypeptide reads, in one-letter code: uncharacterized protein (596 aa).

A helical transmembrane segment spans residues 7-26; it reads FWPILLGFTVLVAAGLYYVV.

The protein localises to the membrane. This is an uncharacterized protein from Sinorhizobium fredii (strain NBRC 101917 / NGR234).